The primary structure comprises 246 residues: Bis(5'-nucleosyl)-tetraphosphatase PrpE [asymmetrical] (246 aa).

Belongs to the PrpE family. It depends on Ni(2+) as a cofactor.

It carries out the reaction P(1),P(4)-bis(5'-guanosyl) tetraphosphate + H2O = GMP + GTP + 2 H(+). In terms of biological role, asymmetrically hydrolyzes Ap4p to yield AMP and ATP. The protein is Bis(5'-nucleosyl)-tetraphosphatase PrpE [asymmetrical] of Bacillus cereus (strain ATCC 10987 / NRS 248).